A 303-amino-acid chain; its full sequence is UDP-3-O-acyl-N-acetylglucosamine deacetylase (303 aa).

Zn(2+) is bound by residues His78, His237, and Asp241. Catalysis depends on His264, which acts as the Proton donor.

The protein belongs to the LpxC family. Zn(2+) is required as a cofactor.

It carries out the reaction a UDP-3-O-[(3R)-3-hydroxyacyl]-N-acetyl-alpha-D-glucosamine + H2O = a UDP-3-O-[(3R)-3-hydroxyacyl]-alpha-D-glucosamine + acetate. The protein operates within glycolipid biosynthesis; lipid IV(A) biosynthesis; lipid IV(A) from (3R)-3-hydroxytetradecanoyl-[acyl-carrier-protein] and UDP-N-acetyl-alpha-D-glucosamine: step 2/6. Its function is as follows. Catalyzes the hydrolysis of UDP-3-O-myristoyl-N-acetylglucosamine to form UDP-3-O-myristoylglucosamine and acetate, the committed step in lipid A biosynthesis. This Coxiella burnetii (strain CbuG_Q212) (Coxiella burnetii (strain Q212)) protein is UDP-3-O-acyl-N-acetylglucosamine deacetylase.